We begin with the raw amino-acid sequence, 94 residues long: Large ribosomal subunit protein uL23 (94 aa).

The protein belongs to the universal ribosomal protein uL23 family. In terms of assembly, part of the 50S ribosomal subunit. Contacts protein L29, and trigger factor when it is bound to the ribosome.

In terms of biological role, one of the early assembly proteins it binds 23S rRNA. One of the proteins that surrounds the polypeptide exit tunnel on the outside of the ribosome. Forms the main docking site for trigger factor binding to the ribosome. The chain is Large ribosomal subunit protein uL23 from Listeria monocytogenes serotype 4b (strain CLIP80459).